The chain runs to 743 residues: Protein will decrease acetylation (743 aa).

WD repeat units follow at residues E389–K428, L493–W524, Y535–I576, Y577–V618, F619–E660, and L661–D702.

The protein belongs to the WD repeat TAF5 family. Component of the Spt-Ada-Gcn5 acetyltransferase (SAGA) complex consisting of wda/Taf5L, Saf6, Taf9, Taf10b, Taf12, Ada1, Spt3, Spt7, Spt20, Sf3b3, Sf3b5, Nipped-A/Tra1, a histone acetyltransferase (HAT) module made up of Gcn5, Ada2b (Isoform B), Ada3 and Sgf29, and a deubiquitinase (DUB) module made up of not/nonstop, Sgf11 and e(y)2 tethered to SAGA by Atxn7. Not essential for the assembly or integrity of the SAGA complex. Not a component of the Ada2a-containing ATAC complex.

It is found in the nucleus. The protein localises to the chromosome. Its function is as follows. Component of the transcription regulatory complex SAGA, a multiprotein complex that activates transcription by remodeling chromatin and mediating histone acetylation and deubiquitination. The SAGA complex predominantly acetylates histone H3. Involved in acetylation of histone H3 on 'Lys-10' (H3K9ac) by the SAGA complex in the larval central nervous system. Involved in SAGA complex coactivator functions. Required for oogenesis. This Drosophila melanogaster (Fruit fly) protein is Protein will decrease acetylation.